We begin with the raw amino-acid sequence, 293 residues long: Protein transport protein yif1 (293 aa).

Over 1 to 139 (MPPKLYHPQP…PPAEDLNSPD (139 aa)) the chain is Cytoplasmic. The helical transmembrane segment at 140 to 160 (MYIPLMAFTTHILLLCALAGL) threads the bilayer. At 161 to 175 (QDDFQPELFGLRASK) the chain is on the lumenal side. A helical transmembrane segment spans residues 176–196 (ACAVVLVEFLATRLGCYLLNI). The Cytoplasmic segment spans residues 197-201 (SSQSQ). Residues 202-222 (VLDLLAFSGYKFVGLILTSLS) form a helical membrane-spanning segment. Over 223–226 (KLFE) the chain is Lumenal. A helical transmembrane segment spans residues 227-247 (MPWVTRFVFLYMYLATAFFLL). Residues 248-271 (RSLKYAVLPESTMAINATITSHQR) are Cytoplasmic-facing. The helical transmembrane segment at 272-292 (SRRIYFLFFIAASQILFMYVL) threads the bilayer. A topological domain (lumenal) is located at residue Ser293.

It belongs to the YIF1 family. As to quaternary structure, component of the yip1-yif1 complex, composed of at least yif1, yip1 and yos1. The complex interacts with the ER to Golgi SNAREs bos1 and sec22.

Its subcellular location is the endoplasmic reticulum membrane. It is found in the golgi apparatus membrane. It localises to the cytoplasmic vesicle. The protein resides in the COPII-coated vesicle. Required for fusion of ER-derived vesicles with the Golgi during ER-to-Golgi protein transport. May be involved in proper membrane localization of Rab GTPases. The protein is Protein transport protein yif1 of Schizosaccharomyces pombe (strain 972 / ATCC 24843) (Fission yeast).